Consider the following 179-residue polypeptide: Phosphopantetheine adenylyltransferase (179 aa).

Substrate is bound at residue Ser23. Residues 23–24 and His31 each bind ATP; that span reads SF. 3 residues coordinate substrate: Lys55, Ala87, and Arg101. ATP-binding positions include 102–104, Glu112, and 137–143; these read GIR and FAHVSSS.

Belongs to the bacterial CoaD family. Homohexamer. Requires Mg(2+) as cofactor.

It localises to the cytoplasm. The catalysed reaction is (R)-4'-phosphopantetheine + ATP + H(+) = 3'-dephospho-CoA + diphosphate. It functions in the pathway cofactor biosynthesis; coenzyme A biosynthesis; CoA from (R)-pantothenate: step 4/5. Functionally, reversibly transfers an adenylyl group from ATP to 4'-phosphopantetheine, yielding dephospho-CoA (dPCoA) and pyrophosphate. The chain is Phosphopantetheine adenylyltransferase from Rhodopirellula baltica (strain DSM 10527 / NCIMB 13988 / SH1).